We begin with the raw amino-acid sequence, 261 residues long: tRNA pseudouridine synthase A (261 aa).

Aspartate 51 functions as the Nucleophile in the catalytic mechanism. Tyrosine 109 provides a ligand contact to substrate.

The protein belongs to the tRNA pseudouridine synthase TruA family. In terms of assembly, homodimer.

The catalysed reaction is uridine(38/39/40) in tRNA = pseudouridine(38/39/40) in tRNA. Functionally, formation of pseudouridine at positions 38, 39 and 40 in the anticodon stem and loop of transfer RNAs. This is tRNA pseudouridine synthase A from Shewanella halifaxensis (strain HAW-EB4).